The chain runs to 513 residues: ATP synthase subunit alpha (513 aa).

Residue 169 to 176 coordinates ATP; it reads GDRQTGKT.

Belongs to the ATPase alpha/beta chains family. F-type ATPases have 2 components, CF(1) - the catalytic core - and CF(0) - the membrane proton channel. CF(1) has five subunits: alpha(3), beta(3), gamma(1), delta(1), epsilon(1). CF(0) has three main subunits: a(1), b(2) and c(9-12). The alpha and beta chains form an alternating ring which encloses part of the gamma chain. CF(1) is attached to CF(0) by a central stalk formed by the gamma and epsilon chains, while a peripheral stalk is formed by the delta and b chains.

It localises to the cell inner membrane. The catalysed reaction is ATP + H2O + 4 H(+)(in) = ADP + phosphate + 5 H(+)(out). In terms of biological role, produces ATP from ADP in the presence of a proton gradient across the membrane. The alpha chain is a regulatory subunit. This Ralstonia pickettii (strain 12J) protein is ATP synthase subunit alpha.